A 59-amino-acid chain; its full sequence is Cecropin-C type 1 (59 aa).

The N-terminal stretch at 1 to 23 is a signal peptide; it reads MNFTKIFVLIAMAALLLVGQSEA.

The protein localises to the secreted. Its function is as follows. Cecropins have lytic and antibacterial activity against several Gram-positive and Gram-negative bacteria. This is Cecropin-C type 1 (CECC1) from Aedes albopictus (Asian tiger mosquito).